Reading from the N-terminus, the 336-residue chain is Methionyl-tRNA formyltransferase (336 aa).

110-113 (SLLP) serves as a coordination point for (6S)-5,6,7,8-tetrahydrofolate.

It belongs to the Fmt family.

It catalyses the reaction L-methionyl-tRNA(fMet) + (6R)-10-formyltetrahydrofolate = N-formyl-L-methionyl-tRNA(fMet) + (6S)-5,6,7,8-tetrahydrofolate + H(+). Attaches a formyl group to the free amino group of methionyl-tRNA(fMet). The formyl group appears to play a dual role in the initiator identity of N-formylmethionyl-tRNA by promoting its recognition by IF2 and preventing the misappropriation of this tRNA by the elongation apparatus. This is Methionyl-tRNA formyltransferase from Prochlorococcus marinus (strain NATL2A).